Here is a 470-residue protein sequence, read N- to C-terminus: Probable V-type proton ATPase subunit H 2 (470 aa).

Belongs to the V-ATPase H subunit family. V-ATPase is a heteromultimeric enzyme made up of two complexes: the ATP-hydrolytic V1 complex and the proton translocation V0 complex. The V1 complex consists of three catalytic AB heterodimers that form a heterohexamer, three peripheral stalks each consisting of EG heterodimers, one central rotor including subunits D and F, and the regulatory subunits C and H. The proton translocation complex V0 consists of the proton transport subunit a, a ring of proteolipid subunits c9c'', rotary subunit d, subunits e and f, and the accessory subunits vah-19/Ac45 and vah-20/PRR.

Subunit of the V1 complex of vacuolar(H+)-ATPase (V-ATPase), a multisubunit enzyme composed of a peripheral complex (V1) that hydrolyzes ATP and a membrane integral complex (V0) that translocates protons. V-ATPase is responsible for acidifying and maintaining the pH of intracellular compartments and in some cell types, is targeted to the plasma membrane, where it is responsible for acidifying the extracellular environment. Subunit H is essential for V-ATPase activity, but not for the assembly of the complex. This chain is Probable V-type proton ATPase subunit H 2, found in Caenorhabditis elegans.